The sequence spans 189 residues: Movement protein p22 (189 aa).

It belongs to the tombusvirus/aureusvirus movement protein p22 family. In terms of assembly, interacts with host protein HFI22. Post-translationally, phosphorylated.

The protein resides in the host membrane. In terms of biological role, cell-to-cell movement. Displays RNA-binding activity. The sequence is that of Movement protein p22 from Capsicum annuum (Capsicum pepper).